The primary structure comprises 203 residues: Snake venom metalloproteinase atroxase (203 aa).

A Pyrrolidone carboxylic acid (Glu) modification is found at E1. N5 carries an N-linked (GlcNAc...) asparagine glycan. Residues 9-203 form the Peptidase M12B domain; it reads RYIELVVVAD…KQYNPQIXNK (195 aa). Ca(2+) is bound by residues E12 and D96. H145 provides a ligand contact to Zn(2+). E146 is a catalytic residue. The Zn(2+) site is built by H149 and H155. A disulfide bridge connects residues C160 and C167. N202 serves as a coordination point for Ca(2+).

This sequence belongs to the venom metalloproteinase (M12B) family. P-I subfamily. Monomer. The cofactor is Zn(2+). In terms of processing, the N-terminus is blocked. As to expression, expressed by the venom gland.

The protein localises to the secreted. The enzyme catalyses Cleavage of 5-His-|-Leu-6, 9-Ser-|-His-10, 10-His-|-Leu-11, 14-Ala-|-Leu-15 and 16-Tyr-|-Leu-17 in insulin B chain.. Its activity is regulated as follows. Inhibited by EDTA and alpha2-macroglobulin. Its function is as follows. Snake venom zinc metalloprotease that has Aalpha, Bbeta fibrin(ogen)olytic activities. It cleaves the Aalpha chain of fibrinogen first followed by the Bbeta chain and shows no effect on the gamma chain. Does not induce or inhibit platelet aggregation, and is unable to activate plasminogen. Exhibits low lethality when tested on mice. Intravenous administration results in thrombolysis within one hour followed by recanalization. Fibrinogenolytic activity results in a 60% decrease in the rat's plasma fibrinogen level. Histological examination of kidney, liver, heart and lung tissue shows no necrosis nor hemorrhage. The protein is Snake venom metalloproteinase atroxase of Crotalus atrox (Western diamondback rattlesnake).